A 104-amino-acid chain; its full sequence is T-complex protein 1 subunit zeta (104 aa).

Residue glycine 24 participates in ADP binding. Glycine 24 is a binding site for ATP. Residue aspartate 75 participates in Mg(2+) binding. Residues glycine 76, threonine 78, and serine 79 each contribute to the ADP site. Residues glycine 76 and threonine 78 each coordinate ATP.

Belongs to the TCP-1 chaperonin family. Component of the chaperonin-containing T-complex (TRiC), a hexadecamer composed of two identical back-to-back stacked rings enclosing a protein folding chamber. Each ring is made up of eight different subunits: TCP1/CCT1, CCT2, CCT3, CCT4, CCT5, CCT6A/CCT6, CCT7, CCT8. Interacts with PACRG.

Its subcellular location is the cytoplasm. The enzyme catalyses ATP + H2O = ADP + phosphate + H(+). Functionally, component of the chaperonin-containing T-complex (TRiC), a molecular chaperone complex that assists the folding of actin, tubulin and other proteins upon ATP hydrolysis. The TRiC complex mediates the folding of WRAP53/TCAB1, thereby regulating telomere maintenance. The sequence is that of T-complex protein 1 subunit zeta (CCT6) from Sus scrofa (Pig).